The sequence spans 311 residues: Formimidoylglutamase (311 aa).

H130, D155, H157, D159, C242, and D244 together coordinate Mn(2+).

Belongs to the arginase family. Mn(2+) is required as a cofactor.

The enzyme catalyses N-formimidoyl-L-glutamate + H2O = formamide + L-glutamate. The protein operates within amino-acid degradation; L-histidine degradation into L-glutamate; L-glutamate from N-formimidoyl-L-glutamate (hydrolase route): step 1/1. Catalyzes the conversion of N-formimidoyl-L-glutamate to L-glutamate and formamide. This Staphylococcus aureus (strain bovine RF122 / ET3-1) protein is Formimidoylglutamase.